A 145-amino-acid chain; its full sequence is Ribosome maturation factor RimP (145 aa).

The protein belongs to the RimP family.

The protein localises to the cytoplasm. Required for maturation of 30S ribosomal subunits. In Azotobacter vinelandii (strain DJ / ATCC BAA-1303), this protein is Ribosome maturation factor RimP.